Consider the following 76-residue polypeptide: Acyl carrier protein (76 aa).

The Carrier domain occupies 1–76; it reads MSIEERVKKI…SAIDYVQNNQ (76 aa). The residue at position 36 (serine 36) is an O-(pantetheine 4'-phosphoryl)serine.

This sequence belongs to the acyl carrier protein (ACP) family. In terms of processing, 4'-phosphopantetheine is transferred from CoA to a specific serine of apo-ACP by AcpS. This modification is essential for activity because fatty acids are bound in thioester linkage to the sulfhydryl of the prosthetic group.

The protein localises to the cytoplasm. Its pathway is lipid metabolism; fatty acid biosynthesis. Carrier of the growing fatty acid chain in fatty acid biosynthesis. The sequence is that of Acyl carrier protein from Mannheimia succiniciproducens (strain KCTC 0769BP / MBEL55E).